Here is a 365-residue protein sequence, read N- to C-terminus: Flagellar P-ring protein (365 aa).

The N-terminal stretch at 1–19 is a signal peptide; sequence MIKFLSALILLLVITAAQA.

The protein belongs to the FlgI family. As to quaternary structure, the basal body constitutes a major portion of the flagellar organelle and consists of four rings (L,P,S, and M) mounted on a central rod.

Its subcellular location is the periplasm. The protein localises to the bacterial flagellum basal body. Functionally, assembles around the rod to form the L-ring and probably protects the motor/basal body from shearing forces during rotation. The protein is Flagellar P-ring protein of Escherichia coli O81 (strain ED1a).